The following is an 893-amino-acid chain: Serine/threonine-protein kinase/endoribonuclease IRE1 (893 aa).

The first 19 residues, 1-19 (MRSLRRVLLQLVLLAGVAF), serve as a signal peptide directing secretion. Residues 20–379 (RGVRFDDAAD…NSVTKFSYRW (360 aa)) lie on the Lumenal side of the membrane. N-linked (GlcNAc...) asparagine glycans are attached at residues N105, N158, N259, and N351. Residues 380–397 (LFPTFLMLLIMACLVKLA) form a helical membrane-spanning segment. Residues 398 to 893 (DASKYCRQFV…FSKYFLGSSA (496 aa)) lie on the Cytoplasmic side of the membrane. The interval 451–478 (ASDKEGNGTGGSTEAQSNKAHDSTNVEL) is disordered. The Protein kinase domain occupies 491-759 (CVYSKEIGKG…AVYVMHHPFF (269 aa)). Residues 497–505 (IGKGSNGTV) and K519 contribute to the ATP site. D625 (proton acceptor) is an active-site residue. The 129-residue stretch at 762–890 (PELCLSFLRD…EEAFSKYFLG (129 aa)) folds into the KEN domain.

Belongs to the protein kinase superfamily. Ser/Thr protein kinase family. As to quaternary structure, homodimer; disulfide-linked. Dimer formation is driven by hydrophobic interactions within the N-terminal luminal domains and stabilized by disulfide bridges. Post-translationally, autophosphorylated. Expressed in roots, nodes, internodes, leaf sheaths, leaf blades, young ears and mature ears.

The protein resides in the endoplasmic reticulum membrane. It carries out the reaction L-seryl-[protein] + ATP = O-phospho-L-seryl-[protein] + ADP + H(+). The catalysed reaction is L-threonyl-[protein] + ATP = O-phospho-L-threonyl-[protein] + ADP + H(+). Involved in endoplasmic reticulum (ER) stress response. Senses unfolded proteins in the lumen of the ER via its N-terminal domain which leads to enzyme auto-activation. The active endoribonuclease domain splices bZIP50 mRNA to generate a new C-terminus, converting it into a potent unfolded-protein response (UPR) transcriptional activator, which then induces transcription of UPR target genes, such as luminal-binding protein (BiP) chaperones. The sequence is that of Serine/threonine-protein kinase/endoribonuclease IRE1 from Oryza sativa subsp. japonica (Rice).